Consider the following 20-residue polypeptide: Unknown protein NF042 from 2D-PAGE (20 aa).

This chain is Unknown protein NF042 from 2D-PAGE, found in Naegleria fowleri (Brain eating amoeba).